The primary structure comprises 291 residues: Protease HtpX homolog (291 aa).

2 helical membrane passes run 11 to 31 and 34 to 54; these read INTF…GLLA and FLGM…ACVQ. H140 is a Zn(2+) binding site. The active site involves E141. H144 serves as a coordination point for Zn(2+). The next 2 membrane-spanning stretches (helical) occupy residues 155–175 and 186–206; these read IVFG…RALI and AFSF…AMLV. E215 contributes to the Zn(2+) binding site.

It belongs to the peptidase M48B family. The cofactor is Zn(2+).

The protein resides in the cell membrane. The sequence is that of Protease HtpX homolog from Tropheryma whipplei (strain TW08/27) (Whipple's bacillus).